Consider the following 227-residue polypeptide: Cytidylate kinase (227 aa).

Residue glycine 10–threonine 18 coordinates ATP.

It belongs to the cytidylate kinase family. Type 1 subfamily.

It localises to the cytoplasm. The enzyme catalyses CMP + ATP = CDP + ADP. It carries out the reaction dCMP + ATP = dCDP + ADP. This Streptococcus agalactiae serotype Ia (strain ATCC 27591 / A909 / CDC SS700) protein is Cytidylate kinase.